A 451-amino-acid chain; its full sequence is Phosphoglucosamine mutase (451 aa).

The active-site Phosphoserine intermediate is the Ser101. Residues Ser101, Asp240, Asp242, and Asp244 each coordinate Mg(2+). Residue Ser101 is modified to Phosphoserine.

The protein belongs to the phosphohexose mutase family. The cofactor is Mg(2+). In terms of processing, activated by phosphorylation.

It carries out the reaction alpha-D-glucosamine 1-phosphate = D-glucosamine 6-phosphate. Functionally, catalyzes the conversion of glucosamine-6-phosphate to glucosamine-1-phosphate. The protein is Phosphoglucosamine mutase of Streptococcus pyogenes serotype M3 (strain SSI-1).